Reading from the N-terminus, the 828-residue chain is Glycerol-3-phosphate acyltransferase 1, mitochondrial (828 aa).

Residues 1-87 (MEESSVTIGT…FFNPSIPSLG (87 aa)) are Cytoplasmic-facing. The important for mitochondrial localization stretch occupies residues 80–120 (NPSIPSLGLRNVIYINETHTRHRGWLARRLSYILFVQERDV). The stretch at 88 to 118 (LRNVIYINETHTRHRGWLARRLSYILFVQER) is an intramembrane region. The Cytoplasmic segment spans residues 119-828 (DVHKGMFATS…LEYILSFVVL (710 aa)). An HXXXXD motif motif is present at residues 230-235 (HRSHID). CoA-binding residues include Arg278, Arg279, Lys288, Arg293, and Arg328. Ser380 carries the post-translational modification Phosphoserine. Arg462 is a CoA binding site. Residues Ser688 and Ser695 each carry the phosphoserine modification. 2 positions are modified to N6-acetyllysine: Lys780 and Lys784.

It belongs to the GPAT/DAPAT family.

The protein resides in the mitochondrion outer membrane. It catalyses the reaction sn-glycerol 3-phosphate + an acyl-CoA = a 1-acyl-sn-glycero-3-phosphate + CoA. It carries out the reaction sn-glycerol 3-phosphate + hexadecanoyl-CoA = 1-hexadecanoyl-sn-glycero-3-phosphate + CoA. The enzyme catalyses (9Z,12Z)-octadecadienoyl-CoA + sn-glycerol 3-phosphate = 1-(9Z,12Z)-octadecadienoyl-sn-glycero-3-phosphate + CoA. The catalysed reaction is sn-glycerol 3-phosphate + (9Z)-octadecenoyl-CoA = 1-(9Z-octadecenoyl)-sn-glycero-3-phosphate + CoA. It catalyses the reaction sn-glycerol 3-phosphate + octadecanoyl-CoA = 1-octadecanoyl-sn-glycero-3-phosphate + CoA. It carries out the reaction dodecanoyl-CoA + sn-glycerol 3-phosphate = 1-dodecanoyl-sn-glycerol 3-phosphate + CoA. The enzyme catalyses 1-acyl-sn-glycero-3-phospho-(1'-sn-glycerol) + an acyl-CoA = a 1,2-diacyl-sn-glycero-3-phospho-(1'-sn-glycerol) + CoA. It participates in phospholipid metabolism; CDP-diacylglycerol biosynthesis; CDP-diacylglycerol from sn-glycerol 3-phosphate: step 1/3. In terms of biological role, mitochondrial membrane protein that catalyzes the essential first step of biosynthesis of glycerolipids such as triglycerides, phosphatidic acids and lysophosphatidic acids. Esterifies acyl-group from acyl-coenzyme A (acyl-CoA) to the sn-1 position of glycerol-3-phosphate, to produce lysophosphatidic acid. Has a narrow hydrophobic binding cleft that selects for a linear acyl chain. Catalytic activity is higher for substrates with a 16-carbon acyl chain. The protein is Glycerol-3-phosphate acyltransferase 1, mitochondrial of Rattus norvegicus (Rat).